The sequence spans 458 residues: Cysteine--tRNA ligase (458 aa).

Cys33 serves as a coordination point for Zn(2+). The 'HIGH' region signature appears at 35 to 45 (PTVYDFAHIGN). Cys221, His246, and Glu250 together coordinate Zn(2+). The short motif at 279-283 (KMSKS) is the 'KMSKS' region element. Lys282 contacts ATP.

The protein belongs to the class-I aminoacyl-tRNA synthetase family. As to quaternary structure, monomer. The cofactor is Zn(2+).

It localises to the cytoplasm. It catalyses the reaction tRNA(Cys) + L-cysteine + ATP = L-cysteinyl-tRNA(Cys) + AMP + diphosphate. The polypeptide is Cysteine--tRNA ligase (Rhizobium etli (strain ATCC 51251 / DSM 11541 / JCM 21823 / NBRC 15573 / CFN 42)).